The chain runs to 235 residues: Fibrillarin-like rRNA/tRNA 2'-O-methyltransferase (235 aa).

S-adenosyl-L-methionine contacts are provided by residues 91 to 92 (TT), 110 to 111 (EF), 137 to 138 (DA), and 157 to 160 (DVAQ).

It belongs to the methyltransferase superfamily. Fibrillarin family. As to quaternary structure, interacts with nop5. Component of box C/D small ribonucleoprotein (sRNP) particles that contain rpl7ae, FlpA and nop5, plus a guide RNA.

Its function is as follows. Involved in pre-rRNA and tRNA processing. Utilizes the methyl donor S-adenosyl-L-methionine to catalyze the site-specific 2'-hydroxyl methylation of ribose moieties in rRNA and tRNA. Site specificity is provided by a guide RNA that base pairs with the substrate. Methylation occurs at a characteristic distance from the sequence involved in base pairing with the guide RNA. The chain is Fibrillarin-like rRNA/tRNA 2'-O-methyltransferase from Pyrobaculum islandicum (strain DSM 4184 / JCM 9189 / GEO3).